The following is a 322-amino-acid chain: Short chain dehydrogenase AOL_s00215g274 (322 aa).

Residues 47–48 (AV), 104–106 (IAV), 197–201 (YNVSK), and 230–232 (VAT) contribute to the NAD(+) site. Tyr197 acts as the Proton acceptor in catalysis.

It belongs to the short-chain dehydrogenases/reductases (SDR) family.

Its pathway is secondary metabolite biosynthesis; terpenoid biosynthesis. In terms of biological role, short chain dehydrogenase; part of the gene cluster that mediates the biosynthesis of sesquiterpenyl epoxy-cyclohexenoids (SECs) such as anthrobotrisins and arthrosporols, metabolites that possess a novel hybrid carbon skeleton consisting of a polyketide-derived epoxycyclohexenol combined with a terpenoid-derived monocyclic sesquiterpenol substructure (PKS-PTS hybrid). The SEC pathway plays an important role for fungal soil colonization via decreasing fungal nematode-capturing ability. Within the pathway, the cytochrome P450 monooxygenase AOL_s00215g274 is involved in specific regional ketone reductions at C-4 of farnesyl epoxy-quinone. The pathway begins with the biosynthesis of 6-methylsalicylic acid (6-MSA), the first precursor of the polyketide-derived epoxycyclohexenol in arthrosporols, by the polyketide synthase (PKS) AOL_s00215g283 via condensation of 1 acetate and 3 malonate units. The 6-methylsalicylic acid decarboxylase AOL_s00215g281 then catalyzes the decarboxylation of 6-methylsalicylic acid to yield m-cresol. The cytochrome P450 monooxygenase AOL_s00215g282 further oxidizes m-cresol to yield toluquinol. With the assistance of the oxidoreductase AOL_s00215g277, the polyprenyl transferase AOL_s00215g276 catalyzes the farnesylation of toluquinol to produce farnesyl hydroquinone, the hybrid precursor for biosynthesis of SECs. Farnesyl hydroquinone undergoes epoxidation and then subsequent dehydrogenation to form farnesyl epoxy-quinone, the first and simplest SEC. The cytochrome P450 monooxygenase AOL_s00215g278 and the FAD-dependent monooxygenase AOL_s00215g279 might be involved in the oxygenation of the phenol moiety, most likely in the epoxy formation. The cytochrome P450 monooxygenases AOL_s00215g274 and AOL_s00215g280 are involved in specific regional ketone reductions at respectively C-4 and C-1 of farnesyl epoxy-quinone PubMed:33823587. In Arthrobotrys oligospora (strain ATCC 24927 / CBS 115.81 / DSM 1491) (Nematode-trapping fungus), this protein is Short chain dehydrogenase AOL_s00215g274.